Consider the following 568-residue polypeptide: Oxygen-dependent choline dehydrogenase (568 aa).

FAD is bound at residue 8–37 (DYIIIGAGSAGNTLAARLTEDAGVTVLLLE). The active-site Proton acceptor is His-477.

This sequence belongs to the GMC oxidoreductase family. It depends on FAD as a cofactor.

It carries out the reaction choline + A = betaine aldehyde + AH2. The catalysed reaction is betaine aldehyde + NAD(+) + H2O = glycine betaine + NADH + 2 H(+). The protein operates within amine and polyamine biosynthesis; betaine biosynthesis via choline pathway; betaine aldehyde from choline (cytochrome c reductase route): step 1/1. Involved in the biosynthesis of the osmoprotectant glycine betaine. Catalyzes the oxidation of choline to betaine aldehyde and betaine aldehyde to glycine betaine at the same rate. The chain is Oxygen-dependent choline dehydrogenase from Pseudomonas syringae pv. syringae (strain B728a).